The following is a 652-amino-acid chain: Large subunit GTPase 1 homolog (652 aa).

At Ser-93 the chain carries Phosphoserine. A CP-type G domain is found at 164–438 (WRQLWRVIER…LCDCPGLVMP (275 aa)). 212 to 215 (NKAD) contacts GTP. Ser-252 is subject to Phosphoserine. Residues 288 to 347 (LGEAASSEEDESEYEDCQEEEEDWQTCLEDSSSSDEEACGQDCKEGHTVDSEAQGRNTPQ) are disordered. Residues 293 to 311 (SSEEDESEYEDCQEEEEDW) are compositionally biased toward acidic residues. GTP-binding positions include 387–394 (GYPNVGKS) and 431–434 (DCPG). The interval 625 to 652 (RGAGKPWKKHGNRNKKEKSRRLYKHLDM) is disordered. The segment covering 630 to 652 (PWKKHGNRNKKEKSRRLYKHLDM) has biased composition (basic residues).

The protein belongs to the TRAFAC class YlqF/YawG GTPase family. LSG1 subfamily.

It is found in the cytoplasm. The protein localises to the endoplasmic reticulum. Its subcellular location is the nucleus. The protein resides in the cajal body. The enzyme catalyses GTP + H2O = GDP + phosphate + H(+). Its function is as follows. Functions as a GTPase. May act by mediating the release of NMD3 from the 60S ribosomal subunit after export into the cytoplasm during the 60S ribosomal subunit maturation. In Bos taurus (Bovine), this protein is Large subunit GTPase 1 homolog.